A 287-amino-acid chain; its full sequence is Phosphatidylserine decarboxylase proenzyme (287 aa).

Active-site charge relay system; for autoendoproteolytic cleavage activity residues include Asp90, His147, and Ser252. The Schiff-base intermediate with substrate; via pyruvic acid; for decarboxylase activity role is filled by Ser252. Ser252 is subject to Pyruvic acid (Ser); by autocatalysis.

It belongs to the phosphatidylserine decarboxylase family. PSD-B subfamily. Prokaryotic type I sub-subfamily. In terms of assembly, heterodimer of a large membrane-associated beta subunit and a small pyruvoyl-containing alpha subunit. It depends on pyruvate as a cofactor. Post-translationally, is synthesized initially as an inactive proenzyme. Formation of the active enzyme involves a self-maturation process in which the active site pyruvoyl group is generated from an internal serine residue via an autocatalytic post-translational modification. Two non-identical subunits are generated from the proenzyme in this reaction, and the pyruvate is formed at the N-terminus of the alpha chain, which is derived from the carboxyl end of the proenzyme. The autoendoproteolytic cleavage occurs by a canonical serine protease mechanism, in which the side chain hydroxyl group of the serine supplies its oxygen atom to form the C-terminus of the beta chain, while the remainder of the serine residue undergoes an oxidative deamination to produce ammonia and the pyruvoyl prosthetic group on the alpha chain. During this reaction, the Ser that is part of the protease active site of the proenzyme becomes the pyruvoyl prosthetic group, which constitutes an essential element of the active site of the mature decarboxylase.

The protein localises to the cell membrane. It carries out the reaction a 1,2-diacyl-sn-glycero-3-phospho-L-serine + H(+) = a 1,2-diacyl-sn-glycero-3-phosphoethanolamine + CO2. The protein operates within phospholipid metabolism; phosphatidylethanolamine biosynthesis; phosphatidylethanolamine from CDP-diacylglycerol: step 2/2. Catalyzes the formation of phosphatidylethanolamine (PtdEtn) from phosphatidylserine (PtdSer). This Pseudomonas putida (strain ATCC 700007 / DSM 6899 / JCM 31910 / BCRC 17059 / LMG 24140 / F1) protein is Phosphatidylserine decarboxylase proenzyme.